We begin with the raw amino-acid sequence, 645 residues long: MAMDEYLWMVILGFIIAFILAFSVGANDVANSFGTAVGSGVVTLRQACILASIFETTGSVLLGAKVGETIRKGIIDVNLYNNTVETLMAGEVSAMVGSAVWQLIASFLRFPISGTHCIVGATIGFSLVAIGTQGVQWMELVKIVASWFISPLLSGFMSGVLFVLIRMFILKKEDPVPNGLRALPVFYAATIAINVFSIMYTGAPVMGLVLPMWAIALISFGVALLFALFVWLFVCPWMRRKITGKLQKECALSRASDESLNKIQEVESPVFKELPGAKAHDDSTVPLTGSAADPSGTSESMSGGHHPRAPYGRALSMTHGTTKSPVSNGTFGFDGTARADGHVYHTVHKDSGLYKDLLHRIRDERPADGAPRQLRRNNSYTCYTAAICGLPGLATRRGDTPAPEDSEKLVADAVAYSRRRLRYDSYSSYCNAVAEAEIEAEEGGVEVRLAPPLAEPEPPRDDPADEEKEEKDSPEVHLLFHFLQVLTACFGSFAHGGNDVSNAIGPLVALWLIYEQGAVLQEAATPVWLLFYGGVGICTGLWVWGRRVIQTMGKDLTPITPSSGFTIELASAFTVVIASNIGLPVSTTHCKVGSVVAVGWIRSRKAVDWRLFRNIFVAWFVTVPVAGLFSAAIMALLIHGILPFV.

Residues 1–5 lie on the Extracellular side of the membrane; that stretch reads MAMDE. Residues 6–26 traverse the membrane as a helical segment; that stretch reads YLWMVILGFIIAFILAFSVGA. The Cytoplasmic segment spans residues 27 to 46; that stretch reads NDVANSFGTAVGSGVVTLRQ. A helical transmembrane segment spans residues 47-67; sequence ACILASIFETTGSVLLGAKVG. Topologically, residues 68–86 are extracellular; that stretch reads ETIRKGIIDVNLYNNTVET. Asn81 carries an N-linked (GlcNAc...) asparagine glycan. The chain crosses the membrane as a helical span at residues 87–107; the sequence is LMAGEVSAMVGSAVWQLIASF. Topologically, residues 108-109 are cytoplasmic; it reads LR. The chain crosses the membrane as a helical span at residues 110–130; sequence FPISGTHCIVGATIGFSLVAI. At 131 to 142 the chain is on the extracellular side; that stretch reads GTQGVQWMELVK. The helical transmembrane segment at 143 to 163 threads the bilayer; that stretch reads IVASWFISPLLSGFMSGVLFV. The Cytoplasmic portion of the chain corresponds to 164–190; the sequence is LIRMFILKKEDPVPNGLRALPVFYAAT. Residues 191-211 form a helical membrane-spanning segment; that stretch reads IAINVFSIMYTGAPVMGLVLP. Residues 212-213 are Extracellular-facing; the sequence is MW. Residues 214 to 234 traverse the membrane as a helical segment; the sequence is AIALISFGVALLFALFVWLFV. Residues 235 to 475 lie on the Cytoplasmic side of the membrane; the sequence is CPWMRRKITG…EEKEEKDSPE (241 aa). Residues Ser253, Ser256, Ser259, Ser268, Ser316, and Ser379 each carry the phosphoserine modification. The interval 275–320 is disordered; the sequence is PGAKAHDDSTVPLTGSAADPSGTSESMSGGHHPRAPYGRALSMTHG. The disordered stretch occupies residues 448 to 471; the sequence is RLAPPLAEPEPPRDDPADEEKEEK. A helical membrane pass occupies residues 476 to 496; the sequence is VHLLFHFLQVLTACFGSFAHG. Residues 497 to 523 are Extracellular-facing; sequence GNDVSNAIGPLVALWLIYEQGAVLQEA. Residues 524 to 544 form a helical membrane-spanning segment; that stretch reads ATPVWLLFYGGVGICTGLWVW. Residues 545 to 564 are Cytoplasmic-facing; sequence GRRVIQTMGKDLTPITPSSG. Residues 565 to 579 form a helical membrane-spanning segment; the sequence is FTIELASAFTVVIAS. Residues 580–586 lie on the Extracellular side of the membrane; it reads NIGLPVS. A helical transmembrane segment spans residues 587-602; that stretch reads TTHCKVGSVVAVGWIR. At 603–614 the chain is on the cytoplasmic side; it reads SRKAVDWRLFRN. A helical transmembrane segment spans residues 615 to 635; it reads IFVAWFVTVPVAGLFSAAIMA. Over 636 to 645 the chain is Extracellular; that stretch reads LLIHGILPFV.

The protein belongs to the inorganic phosphate transporter (PiT) (TC 2.A.20) family. In terms of assembly, homodimer.

The protein resides in the cell membrane. The protein localises to the apical cell membrane. It catalyses the reaction 2 Na(+)(out) + phosphate(out) = 2 Na(+)(in) + phosphate(in). Functionally, sodium-phosphate symporter which preferentially transports the monovalent form of phosphate with a stoichiometry of two sodium ions per phosphate ion. Plays a critical role in the determination of bone quality and strength by providing phosphate for bone mineralization. Required to maintain normal cerebrospinal fluid phosphate levels. Mediates phosphate-induced calcification of vascular smooth muscle cells (VCMCs) and can functionally compensate for loss of SLC20A1 in VCMCs. This is Sodium-dependent phosphate transporter 2 (SLC20A2) from Bos taurus (Bovine).